The following is a 268-amino-acid chain: Glucosamine-6-phosphate deaminase (268 aa).

Asp72 acts as the Proton acceptor; for enolization step in catalysis. The For ring-opening step role is filled by Asp141. The active-site Proton acceptor; for ring-opening step is the His143. Catalysis depends on Glu148, which acts as the For ring-opening step.

This sequence belongs to the glucosamine/galactosamine-6-phosphate isomerase family. NagB subfamily. In terms of assembly, homohexamer.

The enzyme catalyses alpha-D-glucosamine 6-phosphate + H2O = beta-D-fructose 6-phosphate + NH4(+). Its pathway is amino-sugar metabolism; N-acetylneuraminate degradation; D-fructose 6-phosphate from N-acetylneuraminate: step 5/5. Allosterically activated by N-acetylglucosamine 6-phosphate (GlcNAc6P). In terms of biological role, catalyzes the reversible isomerization-deamination of glucosamine 6-phosphate (GlcN6P) to form fructose 6-phosphate (Fru6P) and ammonium ion. This is Glucosamine-6-phosphate deaminase from Histophilus somni (strain 129Pt) (Haemophilus somnus).